We begin with the raw amino-acid sequence, 366 residues long: Putative RING-H2 finger protein ATL21C (366 aa).

A signal peptide spans 1-23; sequence MTFSKQLFPFVFFLLFLVSLRHA. A helical membrane pass occupies residues 243 to 263; it reads LVLVISLSAVTVFVFPTCIAI. An RING-type; atypical zinc finger spans residues 320 to 362; the sequence is CPICLSEYASKETVRFIPECDHCFHVECIDVWLKIHGSCPLCR.

The protein belongs to the RING-type zinc finger family. ATL subfamily.

The protein localises to the membrane. The catalysed reaction is S-ubiquitinyl-[E2 ubiquitin-conjugating enzyme]-L-cysteine + [acceptor protein]-L-lysine = [E2 ubiquitin-conjugating enzyme]-L-cysteine + N(6)-ubiquitinyl-[acceptor protein]-L-lysine.. Its pathway is protein modification; protein ubiquitination. This is Putative RING-H2 finger protein ATL21C (ATL21C) from Arabidopsis thaliana (Mouse-ear cress).